A 118-amino-acid chain; its full sequence is Small ribosomal subunit protein uS13 (118 aa).

The disordered stretch occupies residues 97–118 (VRGQRTKTNARTCKGPRKAIKK).

The protein belongs to the universal ribosomal protein uS13 family. As to quaternary structure, part of the 30S ribosomal subunit. Forms a loose heterodimer with protein S19. Forms two bridges to the 50S subunit in the 70S ribosome.

In terms of biological role, located at the top of the head of the 30S subunit, it contacts several helices of the 16S rRNA. In the 70S ribosome it contacts the 23S rRNA (bridge B1a) and protein L5 of the 50S subunit (bridge B1b), connecting the 2 subunits; these bridges are implicated in subunit movement. Contacts the tRNAs in the A and P-sites. In Buchnera aphidicola subsp. Schizaphis graminum (strain Sg), this protein is Small ribosomal subunit protein uS13.